Here is a 399-residue protein sequence, read N- to C-terminus: Syndecan (399 aa).

The N-terminal stretch at 1 to 28 is a signal peptide; sequence MKPKQKISVEPLLLVAILIGVLVAATHA. A disordered region spans residues 28 to 319; that stretch reads AQDQKSVKPS…TKGIDHRPNG (292 aa). Residues 29-340 are Extracellular-facing; the sequence is QDQKSVKPSA…TSSFFSQPGI (312 aa). Residues 36-46 show a composition bias toward low complexity; sequence PSAAAPSAAAS. The O-linked (Xyl...) (glycosaminoglycan) serine glycan is linked to Ser62. The segment covering 67 to 77 has biased composition (basic and acidic residues); sequence GIHEDLEKDPD. O-linked (Xyl...) (glycosaminoglycan) serine glycosylation is found at Ser79, Ser81, and Ser110. Polar residues predominate over residues 99–116; the sequence is SHNTRISQSSNSGINTAH. Over residues 117-172 the composition is skewed to low complexity; it reads TPTQTSSTIPTTSTSTPMPTTTPTATTPASTTTAAATQISSFANSSSTTTTTLAPT. Asn160 is a glycosylation site (N-linked (GlcNAc...) asparagine). Residues 191-214 show a composition bias toward acidic residues; sequence TESSGDGIDADAEDDDEDDGDDKD. O-linked (Xyl...) (glycosaminoglycan) serine glycosylation occurs at Ser194. A compositionally biased stretch (basic and acidic residues) spans 215-226; sequence YDYNKELDKEID. Residues 253-270 show a composition bias toward acidic residues; it reads DEIDVDGGDEDDNGDSDI. A compositionally biased stretch (polar residues) spans 299-309; the sequence is PNTNVNSQPSD. A helical membrane pass occupies residues 341–365; that stretch reads LAAVIGGAVVGLLCAILVVMFIVYR. At 366-399 the chain is on the cytoplasmic side; it reads MRKKDEGSYALDEPKRSPANNSYAKNANNREFYA. Residues 373–399 form a disordered region; sequence SYALDEPKRSPANNSYAKNANNREFYA. Residues 383–399 are compositionally biased toward polar residues; it reads PANNSYAKNANNREFYA.

The protein belongs to the syndecan proteoglycan family. In 13-16 hours embryos, expressed in lymph glands, peripheral and central nervous system and basal surfaces of gut epithelia. Sdc and robo are coexpressed in domains adjacent to slit; in tracheal pits and midline glia cells.

The protein localises to the membrane. Cell surface proteoglycan that bears heparan sulfate. Required for axonal and myotube guidance, is a necessary component of slit/robo signaling and is required in the slit target cells. This Drosophila melanogaster (Fruit fly) protein is Syndecan (Sdc).